The chain runs to 477 residues: ATP-dependent rRNA helicase RRP3 (477 aa).

A disordered region spans residues 1 to 22 (MSVKVDGMINKKSKTHSKKLDA). Positions 65-93 (KSFNELKLIPELLEAIQQMKFTKPTPIQS) match the Q motif motif. The 172-residue stretch at 96-267 (IPHALEGKDI…RASLHNPVRV (172 aa)) folds into the Helicase ATP-binding domain. 109-116 (AQTGSGKT) contributes to the ATP binding site. Residues 215-218 (DEAD) carry the DEAD box motif. The 145-residue stretch at 294-438 (YLIHLLNEFL…KDPSPSKAVL (145 aa)) folds into the Helicase C-terminal domain. Residues 452 to 477 (AIRQTKDFHEKRNPKKNRDDRDREER) are disordered.

This sequence belongs to the DEAD box helicase family. DDX47/RRP3 subfamily. As to quaternary structure, interacts with the SSU processome.

Its subcellular location is the nucleus. The enzyme catalyses ATP + H2O = ADP + phosphate + H(+). Functionally, ATP-dependent rRNA helicase required for pre-ribosomal RNA processing. Involved in the maturation of the 35S-pre-rRNA and to its cleavage to mature 18S rRNA. The chain is ATP-dependent rRNA helicase RRP3 from Debaryomyces hansenii (strain ATCC 36239 / CBS 767 / BCRC 21394 / JCM 1990 / NBRC 0083 / IGC 2968) (Yeast).